The sequence spans 313 residues: Non-functional target of rapamycin complex subunit LST8-2 (313 aa).

WD repeat units lie at residues 1-35 (MFEN…CYFS), 38-76 (YPDL…PHIP), 82-121 (SHTK…CQRE), 123-162 (RSVS…CSCE), 166-205 (EVGT…QTMT), 215-255 (AHNS…LEKV), and 258-297 (GHER…EEMV).

This sequence belongs to the WD repeat LST8 family.

Its function is as follows. Probable non-functional protein. The protein is Non-functional target of rapamycin complex subunit LST8-2 of Arabidopsis thaliana (Mouse-ear cress).